Consider the following 317-residue polypeptide: Beta-ketoacyl-[acyl-carrier-protein] synthase III (317 aa).

Catalysis depends on residues cysteine 112 and histidine 244. The tract at residues glutamine 245–arginine 249 is ACP-binding. Asparagine 274 is an active-site residue.

This sequence belongs to the thiolase-like superfamily. FabH family. Homodimer.

It is found in the cytoplasm. The enzyme catalyses malonyl-[ACP] + acetyl-CoA + H(+) = 3-oxobutanoyl-[ACP] + CO2 + CoA. It participates in lipid metabolism; fatty acid biosynthesis. In terms of biological role, catalyzes the condensation reaction of fatty acid synthesis by the addition to an acyl acceptor of two carbons from malonyl-ACP. Catalyzes the first condensation reaction which initiates fatty acid synthesis and may therefore play a role in governing the total rate of fatty acid production. Possesses both acetoacetyl-ACP synthase and acetyl transacylase activities. Its substrate specificity determines the biosynthesis of branched-chain and/or straight-chain of fatty acids. This chain is Beta-ketoacyl-[acyl-carrier-protein] synthase III, found in Salmonella paratyphi A (strain ATCC 9150 / SARB42).